The sequence spans 422 residues: S-adenosylmethionine synthase (422 aa).

His-15 lines the ATP pocket. Position 17 (Asp-17) interacts with Mg(2+). Glu-43 provides a ligand contact to K(+). Residues Glu-56 and Gln-99 each contribute to the L-methionine site. The tract at residues 99 to 109 is flexible loop; it reads QSPDISRGVTE. ATP-binding positions include 166-168, 232-233, Asp-241, 247-248, Ala-264, and Lys-268; these read DGK, RF, and RK. Asp-241 contacts L-methionine. Lys-272 provides a ligand contact to L-methionine. Positions 390–422 are disordered; sequence AVPATTNGAGSKNGSGSKKEPKRKGKKETGAQA.

It belongs to the AdoMet synthase family. As to quaternary structure, homotetramer; dimer of dimers. Mg(2+) serves as cofactor. The cofactor is K(+).

It localises to the cytoplasm. The enzyme catalyses L-methionine + ATP + H2O = S-adenosyl-L-methionine + phosphate + diphosphate. It functions in the pathway amino-acid biosynthesis; S-adenosyl-L-methionine biosynthesis; S-adenosyl-L-methionine from L-methionine: step 1/1. Functionally, catalyzes the formation of S-adenosylmethionine (AdoMet) from methionine and ATP. The overall synthetic reaction is composed of two sequential steps, AdoMet formation and the subsequent tripolyphosphate hydrolysis which occurs prior to release of AdoMet from the enzyme. The polypeptide is S-adenosylmethionine synthase (Sorangium cellulosum (strain So ce56) (Polyangium cellulosum (strain So ce56))).